A 441-amino-acid chain; its full sequence is UDP-N-acetylglucosamine--N-acetylmuramyl-(pentapeptide) pyrophosphoryl-undecaprenol N-acetylglucosamine transferase (441 aa).

UDP-N-acetyl-alpha-D-glucosamine contacts are provided by residues 28–30 (TGG), asparagine 140, arginine 176, serine 204, isoleucine 257, and glutamine 302.

This sequence belongs to the glycosyltransferase 28 family. MurG subfamily.

Its subcellular location is the cell inner membrane. The enzyme catalyses di-trans,octa-cis-undecaprenyl diphospho-N-acetyl-alpha-D-muramoyl-L-alanyl-D-glutamyl-meso-2,6-diaminopimeloyl-D-alanyl-D-alanine + UDP-N-acetyl-alpha-D-glucosamine = di-trans,octa-cis-undecaprenyl diphospho-[N-acetyl-alpha-D-glucosaminyl-(1-&gt;4)]-N-acetyl-alpha-D-muramoyl-L-alanyl-D-glutamyl-meso-2,6-diaminopimeloyl-D-alanyl-D-alanine + UDP + H(+). It functions in the pathway cell wall biogenesis; peptidoglycan biosynthesis. Functionally, cell wall formation. Catalyzes the transfer of a GlcNAc subunit on undecaprenyl-pyrophosphoryl-MurNAc-pentapeptide (lipid intermediate I) to form undecaprenyl-pyrophosphoryl-MurNAc-(pentapeptide)GlcNAc (lipid intermediate II). The chain is UDP-N-acetylglucosamine--N-acetylmuramyl-(pentapeptide) pyrophosphoryl-undecaprenol N-acetylglucosamine transferase from Xanthomonas oryzae pv. oryzae (strain MAFF 311018).